Reading from the N-terminus, the 164-residue chain is Interferon gamma (164 aa).

An N-terminal signal peptide occupies residues 1–19 (MTCQTYNLFVLSVIMIYYG). Asn42 and Asn61 each carry an N-linked (GlcNAc...) asparagine glycan.

This sequence belongs to the type II (or gamma) interferon family. Homodimer.

Its subcellular location is the secreted. Produced by lymphocytes activated by specific antigens or mitogens. IFN-gamma, in addition to having antiviral activity, has important immunoregulatory functions. It is a potent activator of macrophages, it has antiproliferative effects on transformed cells and it can potentiate the antiviral and antitumor effects of the type I interferons. This chain is Interferon gamma (IFNG), found in Coturnix japonica (Japanese quail).